A 305-amino-acid chain; its full sequence is Deoxyribonuclease gamma (305 aa).

The signal sequence occupies residues 1 to 20; sequence MSRELAPLLLLLLSIHSALA. The Bipartite nuclear localization signal motif lies at 35 to 51; it reads KQEDKNAMDVIVKVIKR. Residues Glu100 and His155 contribute to the active site. Cys194 and Cys231 are disulfide-bonded. The tract at residues 284–305 is not required for free DNA-nuclease activity but required for activity towards liposome-coated DNA; it reads SRAFTNSKKSVTLRKKTKSKRS. A Nuclear localization signal motif is present at residues 296 to 304; that stretch reads LRKKTKSKR.

It belongs to the DNase I family. Ca(2+) is required as a cofactor. The cofactor is Mg(2+). Post-translationally, poly-ADP-ribosylated by PARP1. ADP-ribosylation negatively regulates enzymatic activity during apoptosis. Liver and spleen.

It localises to the nucleus. Its subcellular location is the endoplasmic reticulum. It is found in the secreted. With respect to regulation, inhibited by zinc. Functionally, has DNA hydrolytic activity. Is capable of both single- and double-stranded DNA cleavage, producing DNA fragments with 3'-OH ends. Can cleave chromatin to nucleosomal units and cleaves nucleosomal and liposome-coated DNA. Acts in internucleosomal DNA fragmentation (INDF) during apoptosis and necrosis. The role in apoptosis includes myogenic and neuronal differentiation, and BCR-mediated clonal deletion of self-reactive B cells. Is active on chromatin in apoptotic cell-derived membrane-coated microparticles and thus suppresses anti-DNA autoimmunity. Together with DNASE1, plays a key role in degrading neutrophil extracellular traps (NETs). NETs are mainly composed of DNA fibers and are released by neutrophils to bind pathogens during inflammation. Degradation of intravascular NETs by DNASE1 and DNASE1L3 is required to prevent formation of clots that obstruct blood vessels and cause organ damage following inflammation. The sequence is that of Deoxyribonuclease gamma from Homo sapiens (Human).